The primary structure comprises 321 residues: Cytochrome c biogenesis protein CcsA (321 aa).

The next 8 membrane-spanning stretches (helical) occupy residues 9-29 (ILTHISFSIISIVITIHLMTL), 44-64 (GIISTFFSITGLLITRWIYSG), 71-91 (LYESLIFLSWSFSIIHMIPYL), 98-118 (LSVITVPSVIFTQGFVTSCLS), 143-163 (MLLSYATLLCGSLLSVALLVI), 225-245 (IISLGFIFLTMGILSGAVWAN), 260-280 (WAFITWTIFAIYSHIRININF), and 288-308 (VASIGFLIIWICYFGINLLGI).

This sequence belongs to the CcmF/CycK/Ccl1/NrfE/CcsA family. In terms of assembly, may interact with Ccs1.

Its subcellular location is the plastid. The protein resides in the chloroplast thylakoid membrane. Functionally, required during biogenesis of c-type cytochromes (cytochrome c6 and cytochrome f) at the step of heme attachment. The protein is Cytochrome c biogenesis protein CcsA of Dioscorea elephantipes (Elephant's foot yam).